Reading from the N-terminus, the 589-residue chain is Protein sprouty (589 aa).

3 disordered regions span residues 1–37 (MDRRNGGDPLAPPRPPKLLPRVHRPRAPEPTLSGVDH), 102–194 (RPSS…RPES), and 239–320 (LHLQ…MGLG). Composition is skewed to low complexity over residues 104–135 (SSLSRNSSTASSTTATGISVSGSGSVSGSSSS) and 148–162 (NNSISNNNNNSINNN). Residues 163-172 (FLSHFQSAEP) are compositionally biased toward polar residues. Over residues 239–272 (LHLQQHQQHLQQQQQQQQQQQQQQHLQHQQNQQH) the composition is skewed to low complexity. Residues 276 to 286 (ATTTQATSVGS) are compositionally biased toward polar residues. The region spanning 380–499 (RCGRCRCEQC…CYGRFAGRGC (120 aa)) is the SPR domain.

This sequence belongs to the sprouty family. In terms of assembly, interacts with DRK and RasGAP1 proteins of the Ras pathway. In terms of tissue distribution, in ovary, expressed from stage 7 of oogenesis in the posterior follicle cells and during stage 9 when the follicle cells migrate posteriorly over the oocyte nucleus, expression is seen in the dorsal and lateral cells and is excluded from the ventral cells. Once the migration of follicle cells is complete expressed in the dorsal-anterior corner of the egg chamber. Expressed in the embryonic tracheal system, developing eye imaginal disk, embryonic chordotonal organ precursors, midline glia and wing imaginal disk.

The protein localises to the cell membrane. Inhibitor of tracheal branching that restricts branch budding by antagonizing the BNL-FGF pathway (BNL: branchless, an fgf inducer of branching). Acts as an antagonist of EGFR-mediated signaling in the eye (where it is important for cell determination) midline glia, chordotonal organs, wing and ovarian follicle cells. The protein is Protein sprouty (sty) of Drosophila melanogaster (Fruit fly).